The primary structure comprises 448 residues: Exoglucanase GH7B (448 aa).

An N-terminal signal peptide occupies residues 1–17; sequence MSLAVVFLLGFLAVSHG. Position 18 is a pyrrolidone carboxylic acid (Gln18). Disulfide bonds link Cys62–Cys83 and Cys73–Cys79. Substrate is bound by residues Tyr97, 119–120, and Lys197; that span reads DI. Disulfide bonds link Cys154–Cys415, Cys188–Cys226, Cys192–Cys225, Cys246–Cys271, Cys254–Cys259, and Cys276–Cys350. Glu228 functions as the Nucleophile in the catalytic mechanism. Substrate contacts are provided by residues 230 to 233 and His244; that span reads DIWE. Glu233 (proton donor/acceptor) is an active-site residue. Residues Arg266 and Asp274 each coordinate substrate. Substrate is bound by residues Trp396 and Arg412.

The protein belongs to the glycosyl hydrolase 7 (cellulase C) family. In terms of assembly, monomer. As to expression, highly expressed in the hepatopancreas (at protein level). Little or no expression detected in the hindgut or the rest of the body (at protein level).

Its subcellular location is the secreted. It carries out the reaction Hydrolysis of (1-&gt;4)-beta-D-glucosidic linkages in cellulose and cellotetraose, releasing cellobiose from the non-reducing ends of the chains.. In terms of biological role, exocellobiohydrolase (CBH) that catalyzes the hydrolysis of 1,4-beta-D-glucosidic bonds in cellulose to release the disaccharide cellobiose. The degradation of cellulose involves an interplay between different cellulolytic enzymes. Hydrolysis starts with endoglucanases (EGs), which cut internal beta-1,4-glucosidic bonds in cellulose to reduce the polymerization degree of the substrate and create new chain ends for exocellobiohydrolases (CBHs). The CBHs release the disaccharide cellobiose from the non-reducing end of the cellulose polymer chain. Finally, beta-1,4-glucosidases hydrolyze the cellobiose and other short cello-oligosaccharides into glucose units. This is Exoglucanase GH7B from Limnoria quadripunctata (Gribble).